The following is a 216-amino-acid chain: Glycerol-3-phosphate acyltransferase (216 aa).

5 consecutive transmembrane segments (helical) span residues 5 to 25, 70 to 90, 118 to 138, 140 to 160, and 164 to 184; these read LIAL…FGLV, IAAA…AGAF, VVFW…AAIF, ISSL…LAWG, and VAIM…ANIS. Residues 192-201 show a composition bias toward basic and acidic residues; sequence PRIGGKKSET. The disordered stretch occupies residues 192–216; that stretch reads PRIGGKKSETSADVSDGDDPDTPAT. A compositionally biased stretch (acidic residues) spans 206-216; that stretch reads SDGDDPDTPAT.

It belongs to the PlsY family. As to quaternary structure, probably interacts with PlsX.

It localises to the cell inner membrane. The enzyme catalyses an acyl phosphate + sn-glycerol 3-phosphate = a 1-acyl-sn-glycero-3-phosphate + phosphate. It participates in lipid metabolism; phospholipid metabolism. Functionally, catalyzes the transfer of an acyl group from acyl-phosphate (acyl-PO(4)) to glycerol-3-phosphate (G3P) to form lysophosphatidic acid (LPA). This enzyme utilizes acyl-phosphate as fatty acyl donor, but not acyl-CoA or acyl-ACP. This chain is Glycerol-3-phosphate acyltransferase, found in Maricaulis maris (strain MCS10) (Caulobacter maris).